The following is a 321-amino-acid chain: Putative sulfotransferase vep-2 (321 aa).

The chain crosses the membrane as a helical span at residues 11-31 (IARVLIIIASISVICITLFIS).

It to C.elegans C41C4.1 and C18B2.2.

It localises to the membrane. The chain is Putative sulfotransferase vep-2 from Caenorhabditis elegans.